A 157-amino-acid polypeptide reads, in one-letter code: 17.8 kDa class I heat shock protein (157 aa).

The sHSP domain maps to Glu-41–Ser-156.

Belongs to the small heat shock protein (HSP20) family. As to quaternary structure, homodimer under normal physiological conditions. Aggregates in high oligomeric complexes after heat shock. Binds to AKR2A and to chloroplasts. Expressed ubiquitously at low levels under normal physiological conditions.

It is found in the cytoplasm. Its function is as follows. Cytosolic mediator for sorting and targeting of nascent chloroplast outer envelope membrane (OEM) proteins to the chloroplast. Functions as an AKR2A cofactor to facilitate the targeting of OEP7 to chloroplasts. The sequence is that of 17.8 kDa class I heat shock protein (HSP17.8) from Arabidopsis thaliana (Mouse-ear cress).